A 345-amino-acid polypeptide reads, in one-letter code: N-acetyl-gamma-glutamyl-phosphate reductase (345 aa).

The active site involves Cys-149.

The protein belongs to the NAGSA dehydrogenase family. Type 1 subfamily.

It localises to the cytoplasm. The catalysed reaction is N-acetyl-L-glutamate 5-semialdehyde + phosphate + NADP(+) = N-acetyl-L-glutamyl 5-phosphate + NADPH + H(+). The protein operates within amino-acid biosynthesis; L-arginine biosynthesis; N(2)-acetyl-L-ornithine from L-glutamate: step 3/4. Catalyzes the NADPH-dependent reduction of N-acetyl-5-glutamyl phosphate to yield N-acetyl-L-glutamate 5-semialdehyde. This is N-acetyl-gamma-glutamyl-phosphate reductase from Janthinobacterium sp. (strain Marseille) (Minibacterium massiliensis).